A 446-amino-acid polypeptide reads, in one-letter code: ATP-dependent protease ATPase subunit HslU (446 aa).

ATP-binding positions include valine 17, 59-64, aspartate 255, glutamate 320, and arginine 392; that span reads GVGKTE.

This sequence belongs to the ClpX chaperone family. HslU subfamily. In terms of assembly, a double ring-shaped homohexamer of HslV is capped on each side by a ring-shaped HslU homohexamer. The assembly of the HslU/HslV complex is dependent on binding of ATP.

The protein localises to the cytoplasm. Its function is as follows. ATPase subunit of a proteasome-like degradation complex; this subunit has chaperone activity. The binding of ATP and its subsequent hydrolysis by HslU are essential for unfolding of protein substrates subsequently hydrolyzed by HslV. HslU recognizes the N-terminal part of its protein substrates and unfolds these before they are guided to HslV for hydrolysis. The sequence is that of ATP-dependent protease ATPase subunit HslU from Azotobacter vinelandii (strain DJ / ATCC BAA-1303).